The primary structure comprises 404 residues: DNA replication and repair protein RecF (404 aa).

30 to 37 (GSNGQGKT) contacts ATP.

This sequence belongs to the RecF family.

It localises to the cytoplasm. The RecF protein is involved in DNA metabolism; it is required for DNA replication and normal SOS inducibility. RecF binds preferentially to single-stranded, linear DNA. It also seems to bind ATP. In Clavibacter michiganensis subsp. michiganensis (strain NCPPB 382), this protein is DNA replication and repair protein RecF.